Reading from the N-terminus, the 136-residue chain is Aspartate 1-decarboxylase (136 aa).

Serine 25 acts as the Schiff-base intermediate with substrate; via pyruvic acid in catalysis. Serine 25 carries the pyruvic acid (Ser) modification. Threonine 57 is a substrate binding site. The active-site Proton donor is tyrosine 58. A substrate-binding site is contributed by 73-75; it reads GAA.

Belongs to the PanD family. In terms of assembly, heterooctamer of four alpha and four beta subunits. The cofactor is pyruvate. Post-translationally, is synthesized initially as an inactive proenzyme, which is activated by self-cleavage at a specific serine bond to produce a beta-subunit with a hydroxyl group at its C-terminus and an alpha-subunit with a pyruvoyl group at its N-terminus.

Its subcellular location is the cytoplasm. It carries out the reaction L-aspartate + H(+) = beta-alanine + CO2. It participates in cofactor biosynthesis; (R)-pantothenate biosynthesis; beta-alanine from L-aspartate: step 1/1. In terms of biological role, catalyzes the pyruvoyl-dependent decarboxylation of aspartate to produce beta-alanine. This Corynebacterium glutamicum (strain R) protein is Aspartate 1-decarboxylase.